A 590-amino-acid chain; its full sequence is MEKLSMVTSLLCAITVAVLAVAVVSGEAAVVEHTFVVHEMNATHLCNTTKIYVVNGQFPGPTVDVMEGDTVVVHVINKLPFGLTIHWHGVRQMRSCWADGAGFVTECPIPPGNEHTYRFNVTGQVGTLWWHAHVTCLRATINGAFIVRPRDGKYPFPTPAKDVPIIIGEWWELDLIELDRRMMDGNFDDNPLSATINGKLGDLSNCSRMVEESFILDVKHGESYLLRVINTALFSEYYFRVAGHTFTVVGADGNYLTPFKTDMVTVAPGEAIDVIMVADAPPAHYHMIALANQPPEPDPQIPVFTSRGLVRYAGATANNNGLPVPMPIMPNQHNTMPSYYFHANLTGLAHPERHRVPMHVDERLFVTLGLGSICRGQNTTCKRRRSPETIVVATMNNVSFAHPKTTALLERYYDGTSKGVYTEDFPIRPPRPFNYTNRDLIPPGPLEEALEPTFKATKLKRFKYNTSVEIIFQSTTLMQSDSNPMHLHGYDVFLLAQGLGNFNAKRDVRKFNYHNPQLRNTVQVPRGGWAAIRFVTDNPGMWYLHCHFEFHIIMGMATAFIVEDGPTPETSLPPPPPEFKRCGNNGLSQP.

The N-terminal stretch at 1 to 28 is a signal peptide; that stretch reads MEKLSMVTSLLCAITVAVLAVAVVSGEA. 2 Plastocyanin-like domains span residues 36–152 and 161–315; these read VVHE…PRDG and KDVP…YAGA. N-linked (GlcNAc...) asparagine glycosylation is found at N41 and N47. Residues H86 and H88 each contribute to the Cu cation site. N120 carries an N-linked (GlcNAc...) asparagine glycan. The Cu cation site is built by H131 and H133. Residues N205, N344, N378, N397, N434, and N465 are each glycosylated (N-linked (GlcNAc...) asparagine). One can recognise a Plastocyanin-like 3 domain in the interval 424-566; it reads DFPIRPPRPF…ATAFIVEDGP (143 aa). 8 residues coordinate Cu cation: N483, H486, H488, H545, C546, H547, H551, and M556. Residues 565 to 590 form a disordered region; sequence GPTPETSLPPPPPEFKRCGNNGLSQP.

It belongs to the multicopper oxidase family. The cofactor is Cu cation.

It is found in the secreted. The protein localises to the extracellular space. It localises to the apoplast. The catalysed reaction is 4 hydroquinone + O2 = 4 benzosemiquinone + 2 H2O. Its function is as follows. Lignin degradation and detoxification of lignin-derived products. The protein is Putative laccase-19 (LAC19) of Oryza sativa subsp. indica (Rice).